We begin with the raw amino-acid sequence, 466 residues long: 3-isopropylmalate dehydratase large subunit (466 aa).

3 residues coordinate [4Fe-4S] cluster: Cys347, Cys407, and Cys410.

This sequence belongs to the aconitase/IPM isomerase family. LeuC type 1 subfamily. Heterodimer of LeuC and LeuD. [4Fe-4S] cluster serves as cofactor.

The enzyme catalyses (2R,3S)-3-isopropylmalate = (2S)-2-isopropylmalate. The protein operates within amino-acid biosynthesis; L-leucine biosynthesis; L-leucine from 3-methyl-2-oxobutanoate: step 2/4. Catalyzes the isomerization between 2-isopropylmalate and 3-isopropylmalate, via the formation of 2-isopropylmaleate. This Escherichia coli O127:H6 (strain E2348/69 / EPEC) protein is 3-isopropylmalate dehydratase large subunit.